The chain runs to 175 residues: 3-hydroxydecanoyl-[acyl-carrier-protein] dehydratase (175 aa).

The active site involves His71.

The protein belongs to the thioester dehydratase family. FabA subfamily. As to quaternary structure, homodimer.

Its subcellular location is the cytoplasm. It catalyses the reaction a (3R)-hydroxyacyl-[ACP] = a (2E)-enoyl-[ACP] + H2O. It carries out the reaction (3R)-hydroxydecanoyl-[ACP] = (2E)-decenoyl-[ACP] + H2O. The catalysed reaction is (2E)-decenoyl-[ACP] = (3Z)-decenoyl-[ACP]. It functions in the pathway lipid metabolism; fatty acid biosynthesis. In terms of biological role, necessary for the introduction of cis unsaturation into fatty acids. Catalyzes the dehydration of (3R)-3-hydroxydecanoyl-ACP to E-(2)-decenoyl-ACP and then its isomerization to Z-(3)-decenoyl-ACP. Can catalyze the dehydratase reaction for beta-hydroxyacyl-ACPs with saturated chain lengths up to 16:0, being most active on intermediate chain length. In Rhodopseudomonas palustris (strain BisB5), this protein is 3-hydroxydecanoyl-[acyl-carrier-protein] dehydratase.